A 63-amino-acid polypeptide reads, in one-letter code: Omega-conotoxin Eu1.6 (63 aa).

The first 21 residues, 1 to 21 (MGMRMMFTVFLLVVLATTVVS), serve as a signal peptide directing secretion. Residues 22 to 47 (FTSDRAPDGRNAAAKAFGLITPTVRK) constitute a propeptide that is removed on maturation. Disulfide bonds link Cys49–Cys55 and Cys50–Cys63. Residues 51 to 53 (SNP) are ser-Xaa-Pro motif, crucial for potent interaction with nAChR.

It belongs to the conotoxin A superfamily. As to expression, expressed by the venom duct.

The protein localises to the secreted. Functionally, this amidated peptide potently and teversibly inhibits Cav2.2/CACNA1B. Steady-state inactivation is enhanced at hyperpolarized membrane potentials. Also shows a weak interaction at alpha-3-beta-4/ CHRNA3-CHRNB4 and alpha-7/CHRNA7 nAChRs subtypes. In vivo, exhibits a potent analgesic activity in rat partial sciatic nerve injury and chronic constriction injury models. The sequence is that of Omega-conotoxin Eu1.6 from Conus eburneus (Ivory cone).